Reading from the N-terminus, the 302-residue chain is Potassium/proton antiporter CemA (302 aa).

The next 4 membrane-spanning stretches (helical) occupy residues 55–75, 187–207, 225–247, and 262–282; these read VFVS…ITFL, FVSF…IIIL, FLLI…ELFL, and FIFL…KYWI.

Belongs to the CemA family.

It localises to the plastid. The protein resides in the chloroplast inner membrane. The catalysed reaction is K(+)(in) + H(+)(out) = K(+)(out) + H(+)(in). Contributes to K(+)/H(+) antiport activity by supporting proton efflux to control proton extrusion and homeostasis in chloroplasts in a light-dependent manner to modulate photosynthesis. Prevents excessive induction of non-photochemical quenching (NPQ) under continuous-light conditions. Indirectly promotes efficient inorganic carbon uptake into chloroplasts. This is Potassium/proton antiporter CemA from Tupiella akineta (Green alga).